A 137-amino-acid chain; its full sequence is GEL complex subunit OPTI (137 aa).

Residues 1–44 are Cytoplasmic-facing; the sequence is MSGGRRKEEPPQPQLANGALKVSVWSKVLRSDAAWEDKDEFLDV. The helical transmembrane segment at 45 to 65 threads the bilayer; it reads IYWFRQIIAVVLGVIWGVLPL. Arginine 66 is a topological domain (lumenal). A helical membrane pass occupies residues 67-84; it reads GFLGIAGFCLINAGVLYL. Over 85–103 the chain is Cytoplasmic; sequence YFSNYLQIDEEEYGGTWEL. Residues 104–127 form a helical membrane-spanning segment; that stretch reads TKEGFMTSFALFMVCVADSFTTGH. At 128–137 the chain is on the lumenal side; it reads LDHLLHCHPL.

The protein belongs to the EMC6 family. Component of the GET- and EMC-like (GEL) complex, composed of RAB5IF/OPTI and TMCO1. The GEL complex is part of the multi-pass translocon (MPT) complex, composed of three subcomplexes, the GEL complex (composed of RAB5IF/OPTI and TMCO1), the BOS complex (composed of NCLN/Nicalin, NOMO and TMEM147) and the PAT complex (composed of WDR83OS/Asterix and CCDC47). The MPT complex associates with the SEC61 complex. Interacts with NDUFS3, NDUFA4, NDUFV1, NDUFA9 and NDUFS8 of the mitochondrial membrane respiratory chain NADH dehydrogenase (Complex I). Interacts with UQCRC2 of the ubiquinol-cytochrome c reductase complex (Complex III). Interacts with COX5A and COX7C of the cytochrome c oxidase complex (Complex IV). In terms of tissue distribution, expressed in embryonic stem cells and differentiated neuronal cells.

The protein localises to the endoplasmic reticulum membrane. Its subcellular location is the mitochondrion inner membrane. Its function is as follows. Component of the multi-pass translocon (MPT) complex that mediates insertion of multi-pass membrane proteins into the lipid bilayer of membranes. The MPT complex takes over after the SEC61 complex: following membrane insertion of the first few transmembrane segments of proteins by the SEC61 complex, the MPT complex occludes the lateral gate of the SEC61 complex to promote insertion of subsequent transmembrane regions. Within the MPT complex, the GEL subcomplex may mediate insertion of transmembrane regions into the membrane. In addition to its role in multi-pass membrane insertion, RAB5IF/OPTI also acts as an assembly factor for mitochondrial respiratory complexes. This chain is GEL complex subunit OPTI, found in Homo sapiens (Human).